We begin with the raw amino-acid sequence, 179 residues long: Large ribosomal subunit protein uL5 (179 aa).

This sequence belongs to the universal ribosomal protein uL5 family. Part of the 50S ribosomal subunit; part of the 5S rRNA/L5/L18/L25 subcomplex. Contacts the 5S rRNA and the P site tRNA. Forms a bridge to the 30S subunit in the 70S ribosome.

This is one of the proteins that bind and probably mediate the attachment of the 5S RNA into the large ribosomal subunit, where it forms part of the central protuberance. In the 70S ribosome it contacts protein S13 of the 30S subunit (bridge B1b), connecting the 2 subunits; this bridge is implicated in subunit movement. Contacts the P site tRNA; the 5S rRNA and some of its associated proteins might help stabilize positioning of ribosome-bound tRNAs. This chain is Large ribosomal subunit protein uL5, found in Prochlorococcus marinus (strain MIT 9313).